Consider the following 341-residue polypeptide: Ketol-acid reductoisomerase (NADP(+)) (341 aa).

The KARI N-terminal Rossmann domain occupies 1 to 182 (MTELFYDDDA…GGTRAGVIKT (182 aa)). NADP(+) contacts are provided by residues 25–28 (YGSQ), serine 51, serine 53, and 83–86 (DQVQ). Residue histidine 108 is part of the active site. Glycine 134 is an NADP(+) binding site. One can recognise a KARI C-terminal knotted domain in the interval 183–328 (TFTEETETDL…RELRKLFSWI (146 aa)). Mg(2+)-binding residues include aspartate 191, glutamate 195, glutamate 227, and glutamate 231. Residue serine 252 participates in substrate binding.

This sequence belongs to the ketol-acid reductoisomerase family. The cofactor is Mg(2+).

The enzyme catalyses (2R)-2,3-dihydroxy-3-methylbutanoate + NADP(+) = (2S)-2-acetolactate + NADPH + H(+). It carries out the reaction (2R,3R)-2,3-dihydroxy-3-methylpentanoate + NADP(+) = (S)-2-ethyl-2-hydroxy-3-oxobutanoate + NADPH + H(+). The protein operates within amino-acid biosynthesis; L-isoleucine biosynthesis; L-isoleucine from 2-oxobutanoate: step 2/4. Its pathway is amino-acid biosynthesis; L-valine biosynthesis; L-valine from pyruvate: step 2/4. In terms of biological role, involved in the biosynthesis of branched-chain amino acids (BCAA). Catalyzes an alkyl-migration followed by a ketol-acid reduction of (S)-2-acetolactate (S2AL) to yield (R)-2,3-dihydroxy-isovalerate. In the isomerase reaction, S2AL is rearranged via a Mg-dependent methyl migration to produce 3-hydroxy-3-methyl-2-ketobutyrate (HMKB). In the reductase reaction, this 2-ketoacid undergoes a metal-dependent reduction by NADPH to yield (R)-2,3-dihydroxy-isovalerate. This is Ketol-acid reductoisomerase (NADP(+)) from Renibacterium salmoninarum (strain ATCC 33209 / DSM 20767 / JCM 11484 / NBRC 15589 / NCIMB 2235).